The chain runs to 431 residues: Adenylosuccinate synthetase (431 aa).

Residues 13–19 (GDEGKGK) and 41–43 (GHT) contribute to the GTP site. The Proton acceptor role is filled by D14. The Mg(2+) site is built by D14 and G41. IMP is bound by residues 14-17 (DEGK), 39-42 (NAGH), T130, R144, Q225, T240, and R304. H42 functions as the Proton donor in the catalytic mechanism. 300–306 (ATTGRAR) provides a ligand contact to substrate. Residues R306, 332–334 (KLD), and 415–417 (STG) each bind GTP.

This sequence belongs to the adenylosuccinate synthetase family. As to quaternary structure, homodimer. Mg(2+) serves as cofactor.

The protein localises to the cytoplasm. The enzyme catalyses IMP + L-aspartate + GTP = N(6)-(1,2-dicarboxyethyl)-AMP + GDP + phosphate + 2 H(+). Its pathway is purine metabolism; AMP biosynthesis via de novo pathway; AMP from IMP: step 1/2. Its function is as follows. Plays an important role in the de novo pathway of purine nucleotide biosynthesis. Catalyzes the first committed step in the biosynthesis of AMP from IMP. In Ectopseudomonas mendocina (strain ymp) (Pseudomonas mendocina), this protein is Adenylosuccinate synthetase.